A 202-amino-acid chain; its full sequence is 3-isopropylmalate dehydratase small subunit (202 aa).

It belongs to the LeuD family. LeuD type 1 subfamily. Heterodimer of LeuC and LeuD.

It catalyses the reaction (2R,3S)-3-isopropylmalate = (2S)-2-isopropylmalate. It functions in the pathway amino-acid biosynthesis; L-leucine biosynthesis; L-leucine from 3-methyl-2-oxobutanoate: step 2/4. Catalyzes the isomerization between 2-isopropylmalate and 3-isopropylmalate, via the formation of 2-isopropylmaleate. The sequence is that of 3-isopropylmalate dehydratase small subunit from Nocardia farcinica (strain IFM 10152).